A 241-amino-acid chain; its full sequence is ATP synthase subunit a (241 aa).

The next 5 membrane-spanning stretches (helical) occupy residues Gly30 to Gly50, Phe91 to Trp111, Ile128 to Ser148, Leu193 to Leu213, and Gly214 to Gly234.

Belongs to the ATPase A chain family. F-type ATPases have 2 components, CF(1) - the catalytic core - and CF(0) - the membrane proton channel. CF(1) has five subunits: alpha(3), beta(3), gamma(1), delta(1), epsilon(1). CF(0) has four main subunits: a, b, b' and c.

The protein localises to the cellular thylakoid membrane. Functionally, key component of the proton channel; it plays a direct role in the translocation of protons across the membrane. This is ATP synthase subunit a from Prochlorococcus marinus (strain MIT 9313).